We begin with the raw amino-acid sequence, 425 residues long: Nicotinate dehydrogenase large molybdopterin subunit (425 aa).

Se-Mo-molybdopterin cytosine dinucleotide-binding positions include Q208 and G238–G240.

Belongs to the xanthine dehydrogenase family. Heterooctamer of NDHM, NDHL, NDHS and NDHF. Dimer of heterotetramers. The cofactor is Se-Mo-molybdopterin cytosine dinucleotide.

The enzyme catalyses nicotinate + NADP(+) + H2O = 6-hydroxynicotinate + NADPH + H(+). Its pathway is cofactor degradation; nicotinate degradation; 6-hydroxynicotinate from nicotinate: step 1/1. With respect to regulation, reversibly inactivated by selenide and sulfide. Not inhibited by cyanide. Catalyzes the hydroxylation of nicotinate to 6-hydroxynicotinate. Also active against 2-pyrazinecarboxylic acid, but inactive against other nicotinate analogs. This is Nicotinate dehydrogenase large molybdopterin subunit (ndhL) from Eubacterium barkeri (Clostridium barkeri).